The sequence spans 132 residues: Large ribosomal subunit protein bL19 (132 aa).

The protein belongs to the bacterial ribosomal protein bL19 family.

This protein is located at the 30S-50S ribosomal subunit interface and may play a role in the structure and function of the aminoacyl-tRNA binding site. The protein is Large ribosomal subunit protein bL19 of Persephonella marina (strain DSM 14350 / EX-H1).